Reading from the N-terminus, the 145-residue chain is Large ribosomal subunit protein uL15 (145 aa).

Residues Met1–Arg18 are compositionally biased toward basic and acidic residues. Positions Met1 to Glu51 are disordered. A compositionally biased stretch (gly residues) spans Ser42–Glu51.

This sequence belongs to the universal ribosomal protein uL15 family. In terms of assembly, part of the 50S ribosomal subunit.

Its function is as follows. Binds to the 23S rRNA. This Mesoplasma florum (strain ATCC 33453 / NBRC 100688 / NCTC 11704 / L1) (Acholeplasma florum) protein is Large ribosomal subunit protein uL15.